Here is a 539-residue protein sequence, read N- to C-terminus: Cytochrome c oxidase subunit 1 homolog (539 aa).

Transmembrane regions (helical) follow at residues 28-48 (LFAAHMWVLFFTLVVSTLLLL) and 75-95 (GVMATVFWGVVGFLVGVVVAL). His117 is a heme b binding site. Helical transmembrane passes span 118-138 (TSAVIFAFGGNALIATSFYVV), 154-174 (FVFWGYNLFIIMAATGYLLGI), 187-207 (VDLWLTIVWVAYLATFLGTIL), 214-234 (ISVANWFYLSFIVTIAMLHIV), 265-285 (GHNAVGFFLTAGFLGMMYYFI), 298-318 (LSIIHFWALIFMYIWAGPHHL), 330-350 (LGMVFSIMLWMPSWGGMINGL), 368-388 (MMVMAVAFYGMATFEGPMMSI), 402-422 (IGHVHSGALGWNGMITFGAIY), 443-463 (HFWLATLGIVVYAAVMWVAGI), and 498-518 (LGGLMFLSGALIMAYNVTMTI). Positions 266, 316, and 317 each coordinate Cu cation. Heme b contacts are provided by His404 and His406.

This sequence belongs to the heme-copper respiratory oxidase family. It depends on Cu(2+) as a cofactor. The cofactor is heme b.

It is found in the cell membrane. It catalyses the reaction 4 Fe(II)-[cytochrome c] + O2 + 8 H(+)(in) = 4 Fe(III)-[cytochrome c] + 2 H2O + 4 H(+)(out). It participates in energy metabolism; oxidative phosphorylation. Its function is as follows. Cytochrome c oxidase is the component of the respiratory chain that catalyzes the reduction of oxygen to water. Subunits 1-3 form the functional core of the enzyme complex. Co I is the catalytic subunit of the enzyme. Electrons originating in cytochrome c or a quinol are transferred to the bimetallic center formed by a high-spin heme and copper B. In Agrobacterium tumefaciens (strain T37), this protein is Cytochrome c oxidase subunit 1 homolog (fixN).